The primary structure comprises 353 residues: Probable WRKY transcription factor 7 (353 aa).

A disordered region spans residues 117–259 (VEEKKPETSS…SSRCHCSKKR (143 aa)). Low complexity predominate over residues 158–176 (SHNNNNNQNQTKNGSSSSS). Composition is skewed to polar residues over residues 184–204 (APST…SFMS) and 213–229 (THMS…QLSG). The segment at residues 275–341 (KMADIPSDEF…YEGDHNHALV (67 aa)) is a DNA-binding region (WRKY).

Belongs to the WRKY group II-d family. As to expression, in young, mature and senescent leaves.

The protein localises to the nucleus. Functionally, transcription factor. Interacts specifically with the W box (5'-(T)TGAC[CT]-3'), a frequently occurring elicitor-responsive cis-acting element. The chain is Probable WRKY transcription factor 7 (WRKY7) from Arabidopsis thaliana (Mouse-ear cress).